Here is a 604-residue protein sequence, read N- to C-terminus: Probable translation initiation factor IF-2 (604 aa).

The tr-type G domain occupies 18–232; sequence IRTPIVCVLG…VLIGLAQRYM (215 aa). Positions 27–34 are G1; that stretch reads GHVDHGKT. 27 to 34 lines the GTP pocket; the sequence is GHVDHGKT. Positions 52 to 56 are G2; sequence AITQH. The segment at 88–91 is G3; sequence DTPG. Residues 88–92 and 142–145 contribute to the GTP site; these read DTPGH and TKLD. The interval 142–145 is G4; sequence TKLD. The G5 stretch occupies residues 210 to 212; it reads SAH.

The protein belongs to the TRAFAC class translation factor GTPase superfamily. Classic translation factor GTPase family. IF-2 subfamily.

Its function is as follows. Function in general translation initiation by promoting the binding of the formylmethionine-tRNA to ribosomes. Seems to function along with eIF-2. This Methanospirillum hungatei JF-1 (strain ATCC 27890 / DSM 864 / NBRC 100397 / JF-1) protein is Probable translation initiation factor IF-2.